Consider the following 498-residue polypeptide: MASQGTKRSYEQMETGGERQNATEIRASVGRMVGGIGRFYIQMCTELKLSDYEGRLIQNSITMERMVLSAFDERRNKYLEEHPSAGKDPKKTGGPIYRRRDGKWVRELILYDKEEIRRIWRQANNGEDATAGLTHLMIWHSNLNDATYQRTRALVRTGMDPRMCSLMQGSTLPRRSGAAGAAVKGVGTMVMELIRMIKRGINDRNFWRGENGRRTRIAYERMCNILKGKFQTAAQRAMMDQVRESRNPGNAEIEDLIFLARSALILRGSVAHKSCLPACVYGLAVASGYDFEREGYSLVGIDPFRLLQNSQVFSLIRPNENPAHKSQLVWMACHSAAFEDLRVSSFIRGTRIVPRGQLSTRGVQIASNENMDTMDSNTLELRSRYWAIRTRSGGNTNQQRASAGQISVQPTFSVQRNLPFERATIMAAFTGNTEGRTSDMRTEIIRMMESAKPEDVSFQGRGVFELSDEKATNPIVPSFDMSNEGSYFFGDNAEEFEN.

The Unconventional nuclear localization signal motif lies at 1–18 (MASQGTKRSYEQMETGGE). A disordered region spans residues 1–21 (MASQGTKRSYEQMETGGERQN). Residues 198–216 (KRGINDRNFWRGENGRRTR) carry the Bipartite nuclear localization signal motif.

It belongs to the influenza viruses nucleoprotein family. Homomultimerizes to form the nucleocapsid. May bind host exportin-1/XPO1. Binds to viral genomic RNA. Protein-RNA contacts are mediated by a combination of electrostatic interactions between positively charged residues and the phosphate backbone and planar interactions between aromatic side chains and bases. Post-translationally, late in virus-infected cells, may be cleaved from a 56-kDa protein to a 53-kDa protein by a cellular caspase. This cleavage might be a marker for the onset of apoptosis in infected cells or have a specific function in virus host interaction.

It localises to the virion. The protein resides in the host nucleus. Its function is as follows. Encapsidates the negative strand viral RNA, protecting it from nucleases. The encapsidated genomic RNA is termed the ribonucleoprotein (RNP) and serves as template for transcription and replication. The RNP needs to be localized in the host nucleus to start an infectious cycle, but is too large to diffuse through the nuclear pore complex. NP comprises at least 2 nuclear localization signals that are responsible for the active RNP import into the nucleus through cellular importin alpha/beta pathway. Later in the infection, nclear export of RNPs are mediated through viral proteins NEP interacting with M1 which binds nucleoproteins. It is possible that nucleoprotein binds directly host exportin-1/XPO1 and plays an active role in RNPs nuclear export. M1 interaction with RNP seems to hide nucleoprotein's nuclear localization signals. Soon after a virion infects a new cell, M1 dissociates from the RNP under acidification of the virion driven by M2 protein. Dissociation of M1 from RNP unmasks nucleoprotein's nuclear localization signals, targeting the RNP to the nucleus. The sequence is that of Nucleoprotein from Influenza A virus (strain A/Silky Chicken/Hong Kong/SF189/2001 H5N1 genotype A).